The following is a 590-amino-acid chain: Arginine--tRNA ligase (590 aa).

Positions 130–140 (ANPTGPMHVGH) match the 'HIGH' region motif.

This sequence belongs to the class-I aminoacyl-tRNA synthetase family. As to quaternary structure, monomer.

The protein resides in the cytoplasm. It catalyses the reaction tRNA(Arg) + L-arginine + ATP = L-arginyl-tRNA(Arg) + AMP + diphosphate. The chain is Arginine--tRNA ligase from Methylobacterium nodulans (strain LMG 21967 / CNCM I-2342 / ORS 2060).